The following is a 103-amino-acid chain: Small ribosomal subunit protein uS10 (103 aa).

The protein belongs to the universal ribosomal protein uS10 family. In terms of assembly, part of the 30S ribosomal subunit.

Functionally, involved in the binding of tRNA to the ribosomes. The chain is Small ribosomal subunit protein uS10 from Psychrobacter sp. (strain PRwf-1).